The primary structure comprises 2375 residues: CCR4-NOT transcription complex subunit 1 (2375 aa).

3 consecutive short sequence motifs (LXXLL) follow at residues 153–157 (LPDLL), 181–185 (LHLLL), and 223–227 (LAPLL). Serine 318 carries the post-translational modification Phosphoserine. An LXXLL motif is present at residues 570–574 (LSMLL). Residues 725 to 770 (SAAPHTQSMQGFPPNLGSAFSTPQSPAKAFPPLSTPNQTTAFSGIG) form a disordered region. The interval 799-1014 (NNDPFVQRKL…QGSITTPGSI (216 aa)) is interaction with ZFP36. Serine 1060 is modified (phosphoserine). Residues 1089-1604 (EPPENIQEKI…AQPMKQAWAT (516 aa)) are interaction with CNOT6, CNOT6L, CNOT7 and CNOT8. The segment covering 1314–1326 (QLSAPKKDVKQPE) has biased composition (basic and acidic residues). The interval 1314–1351 (QLSAPKKDVKQPEELPAITTTTTSTTPATSTTCTATVP) is disordered. The segment covering 1332-1349 (TTTTTSTTPATSTTCTAT) has biased composition (low complexity). 3 consecutive short sequence motifs (LXXLL) follow at residues 1638–1642 (LRSLL), 1941–1945 (LIALL), and 2095–2099 (LRVLL).

Belongs to the CNOT1 family. Component of the CCR4-NOT complex; distinct complexes seem to exist that differ in the participation of probably mutually exclusive catalytic subunits. In the complex, interacts directly with CNOT6, CNOT6L, CNOT7 or CNOT8. Interacts in a ligand-dependent fashion with ESR1 and RXRA. Interacts with NANOS2, TOB1 and ZFP36. Interacts with TNRC6A, TNRC6B or TNRC6C; the interactions are direct. Interacts with YTHDF2; the interaction is direct and promotes recruitment of the CCR4-NOT complex to N6-methyladenosine (m6A)-containing mRNAs, leading to their deadenylation and subsequent degradation. Interacts with EIF4ENIF1/4E-T. Interacts in an RNA-independent manner with BICC1 (via KH domains). Interacts with TEX13A; the interaction may inhibit CNOT1 binding to mRNA and subsequently CNOT1-mediated mRNA degradation.

The protein localises to the cytoplasm. It localises to the P-body. It is found in the nucleus. Functionally, scaffolding component of the CCR4-NOT complex which is one of the major cellular mRNA deadenylases and is linked to various cellular processes including bulk mRNA degradation, miRNA-mediated repression, translational repression during translational initiation and general transcription regulation. Additional complex functions may be a consequence of its influence on mRNA expression. Its scaffolding function implies its interaction with the catalytic complex module and diverse RNA-binding proteins mediating the complex recruitment to selected mRNA 3'UTRs. Involved in degradation of AU-rich element (ARE)-containing mRNAs probably via association with ZFP36. Mediates the recruitment of the CCR4-NOT complex to miRNA targets and to the RISC complex via association with TNRC6A, TNRC6B or TNRC6C. Acts as a transcriptional repressor. Represses the ligand-dependent transcriptional activation by nuclear receptors. Involved in the maintenance of embryonic stem (ES) cell identity; prevents their differentiation towards extraembryonic trophectoderm lineages. Plays a role in rapid sperm motility via mediating timely mRNA turnover. This chain is CCR4-NOT transcription complex subunit 1 (Cnot1), found in Mus musculus (Mouse).